A 283-amino-acid chain; its full sequence is Glutamate racemase (283 aa).

Residues 7-8 and 39-40 contribute to the substrate site; these read DS and YG. Catalysis depends on C70, which acts as the Proton donor/acceptor. 71–72 is a substrate binding site; the sequence is NT. The active-site Proton donor/acceptor is the C206. 207 to 208 serves as a coordination point for substrate; that stretch reads TH.

This sequence belongs to the aspartate/glutamate racemases family.

The enzyme catalyses L-glutamate = D-glutamate. It functions in the pathway cell wall biogenesis; peptidoglycan biosynthesis. Provides the (R)-glutamate required for cell wall biosynthesis. This Phenylobacterium zucineum (strain HLK1) protein is Glutamate racemase.